We begin with the raw amino-acid sequence, 119 residues long: Phosphoribosyl-AMP cyclohydrolase (119 aa).

D78 contributes to the Mg(2+) binding site. Residue C79 participates in Zn(2+) binding. Residues D80 and D82 each coordinate Mg(2+). C95 and C102 together coordinate Zn(2+).

It belongs to the PRA-CH family. As to quaternary structure, homodimer. Mg(2+) is required as a cofactor. The cofactor is Zn(2+).

Its subcellular location is the cytoplasm. It carries out the reaction 1-(5-phospho-beta-D-ribosyl)-5'-AMP + H2O = 1-(5-phospho-beta-D-ribosyl)-5-[(5-phospho-beta-D-ribosylamino)methylideneamino]imidazole-4-carboxamide. It participates in amino-acid biosynthesis; L-histidine biosynthesis; L-histidine from 5-phospho-alpha-D-ribose 1-diphosphate: step 3/9. Catalyzes the hydrolysis of the adenine ring of phosphoribosyl-AMP. This is Phosphoribosyl-AMP cyclohydrolase from Jannaschia sp. (strain CCS1).